The chain runs to 375 residues: Neuropeptide Y receptor type 4-2 (375 aa).

Residues 1–39 (MNTSHLLALLLPKSPQGENRSKPLGTPYNFSEHCQDSVD) are Extracellular-facing. N-linked (GlcNAc...) asparagine glycosylation is found at Asn2, Asn19, and Asn29. The helical transmembrane segment at 40–60 (VMVFIVTSYSIETVVGVLGNL) threads the bilayer. Over 61–87 (CLMCVTVRQKEKANVTNLLIANLAFSD) the chain is Cytoplasmic. A helical transmembrane segment spans residues 88–108 (FLMCLLCQPLTAVYTIMDYWI). The Extracellular portion of the chain corresponds to 109–116 (FGETLCKM). The cysteines at positions 114 and 201 are disulfide-linked. Residues 117–137 (SAFIQCMSVTVSILSLVLVAL) traverse the membrane as a helical segment. The Cytoplasmic segment spans residues 138–155 (ERHQLIINPTGWKPSISQ). A helical transmembrane segment spans residues 156-176 (AYLGIVLIWVIACVLSLPFLA). Residues 177–212 (NSILENVFHKNHSKALEFLADKVVCTESWPLAHHRT) are Extracellular-facing. Asn187 carries N-linked (GlcNAc...) asparagine glycosylation. A helical membrane pass occupies residues 213–233 (IYTTFLLLFQYCLPLGFILVC). Over 234 to 263 (YARIYRRLQRQGRVFHKGTYSLRAGHMKQV) the chain is Cytoplasmic. Residues 264–284 (NVVLVVMVVAFAVLWLPLHVF) form a helical membrane-spanning segment. Residues 285–301 (NSLEDWHHEAIPICHGN) are Extracellular-facing. A helical membrane pass occupies residues 302-322 (LIFLVCHLLAMASTCVNPFIY). Residues 323 to 375 (GFLNTNFKKEIKALVLTCQQSAPLEESEHLPLSTVHTEVSKGSLRLSGRSNPI) lie on the Cytoplasmic side of the membrane. The S-palmitoyl cysteine moiety is linked to residue Cys340.

The protein belongs to the G-protein coupled receptor 1 family.

Its subcellular location is the cell membrane. Functionally, g protein-coupled receptor for PPY/pancreatic polypeptide/PP, NPY/neuropeptide Y and PYY/peptide YY that is negatively coupled to cAMP. The rank order of affinity for these polypeptides and their derivatives is PP, PP (2-36) and [Ile-31, Gln-34] PP &gt; [Pro-34] PYY &gt; PYY and [Leu-31, Pro-34] NPY &gt; NPY &gt; PYY (3-36) and NPY (2-36) &gt; PP (13-36) &gt; PP (31-36) &gt; NPY free acid. The protein is Neuropeptide Y receptor type 4-2 of Homo sapiens (Human).